Reading from the N-terminus, the 644-residue chain is uncharacterized protein (644 aa).

Residues leucine 16–glycine 38 form a helical membrane-spanning segment. A compositionally biased stretch (basic and acidic residues) spans valine 586–arginine 603. The tract at residues valine 586–arginine 613 is disordered.

It is found in the membrane. This is an uncharacterized protein from Treponema pallidum (strain Nichols).